The chain runs to 151 residues: Copper transporter 2 (151 aa).

2 helical membrane-spanning segments follow: residues 42–62 (GARG…AVLL) and 97–117 (VAYL…LAIV).

This sequence belongs to the copper transporter (Ctr) (TC 1.A.56) family. SLC31A subfamily. As to quaternary structure, self-interacts. Interacts with SWEET11 and COPT1.

It is found in the cell membrane. Its function is as follows. Involved in the transport of copper, in cooperation with SWEET11 and COPT1. Contributes to the removal of copper (Cu) from xylem, and thus to the sensitivity toward bacterial pathogens such as X.oryzae pv. oryzae (Xoo). This chain is Copper transporter 2 (COPT2), found in Oryza sativa subsp. japonica (Rice).